Reading from the N-terminus, the 801-residue chain is Phosphatidylinositol 4-phosphate 5-kinase 1 (801 aa).

The first 21 residues, Met1–Gly21, serve as a signal peptide directing secretion. MORN repeat units lie at residues Tyr41–Leu63, Tyr64–Ser86, Tyr87–Val109, Tyr110–Thr132, Tyr133–Val155, Tyr156–Thr178, Asn182–Cys201, and Tyr202–Lys223. In terms of domain architecture, PIPK spans Gly366 to Phe797.

Expressed in young seedlings, shoot and seeds, and at lower level in roots, stem and leaf.

It carries out the reaction a 1,2-diacyl-sn-glycero-3-phospho-(1D-myo-inositol 4-phosphate) + ATP = a 1,2-diacyl-sn-glycero-3-phospho-(1D-myo-inositol-4,5-bisphosphate) + ADP + H(+). Involved in flowering. May suppress floral initiation by modifying the expression of genes related to floral induction. This chain is Phosphatidylinositol 4-phosphate 5-kinase 1 (PIPK1), found in Oryza sativa subsp. japonica (Rice).